Reading from the N-terminus, the 58-residue chain is Small ribosomal subunit protein bS21 (58 aa).

Positions 32–42 are enriched in basic and acidic residues; sequence VRKREHYEKPS. Residues 32-58 are disordered; that stretch reads VRKREHYEKPSVKKKKKSEAARKRKFK. A compositionally biased stretch (basic residues) spans 43–58; the sequence is VKKKKKSEAARKRKFK.

This sequence belongs to the bacterial ribosomal protein bS21 family.

This Clostridium botulinum (strain Okra / Type B1) protein is Small ribosomal subunit protein bS21.